The following is a 353-amino-acid chain: Colistin resistance protein EmrA (353 aa).

A helical transmembrane segment spans residues 21–41 (WGVFSVLLLFLVAGILYYFFV). Residues 132–204 (VVAAQADLAR…QASRAQLLAD (73 aa)) are a coiled coil.

It belongs to the membrane fusion protein (MFP) (TC 8.A.1) family.

It localises to the cell inner membrane. In terms of biological role, probably part of an efflux pump system that contributes to adaptation to osmotic stress and resistance to colistin. In Acinetobacter baumannii (strain ATCC 17978 / DSM 105126 / CIP 53.77 / LMG 1025 / NCDC KC755 / 5377), this protein is Colistin resistance protein EmrA.